Here is a 2264-residue protein sequence, read N- to C-terminus: MSVTLSPSGDCFSFNHVKYNNSLNKYLFYNSNLDIVLDDFDFYFNFYVKKYNVLLSFFSDRVLSALYTSMSVSEAASLAMEDFCELALDELKINPFHQLWEETLANWPVYPGTSLLDFCRTQYEIRREAAEASAEILRLKEVARQRAFDDEVEFLIKHGAKVHFAPSFAAQLWRAGKDQKKCRGILLGKLNKAKALGEAHRSAVARAQAKAEVLREFEPSPQQIQRALEAQIFADRLSRKYAALTARVRAKRAAARELREKELFLETQDLLNAPLLPPMEKVGIERKYRKVRPTGSNVTSTPKPNVLENLCPFMGLGAKTADVRCQATLMAGKIHPQYPRLASAIYAWVLGPSMKFECIAPVKTFIKGLTFMVDYFPEEVLIDELNKINSEARCFEASLVLEEERAKLEAHAENANCRANIFMKAMAGVKNMAKCAYSGFLTGCEEAGRSLSEGVCSVMINSFRECIKMIHKELGCAMELIEVMIKKVKDWYNSMLEKLHCGLATLGTYAMYALAILLGCGLTTLLERCIGGAGILTKLFVTGVFAAIGLHAAGGFDGLQREMVQMCTALAAGIFDVHHKGNGKYSPMADILAEQRLEDRRADNVRSIPIISGIISAMQQFGTGLCSMHSISLIEIGKLGAACHSMRMGKEALKEFCATIMYYLGRISDKVTGRETVFFDELSTLVSVDVRGWILCAQSCIRESFHTEIGNQFFRDMVAQLVDDGQKLQVGVNGIPRKISTDYSQLSSDTEGPNELHKRTIRAGISEGRRCEPVWIYLFGQRHCGKSNFMATLDNALAKHFGLPNTTAYRNCKDSFFSGYSGQTFFHVDDLSSVKLDPPMEAEMINLVSCQEVPLNMADLADKPIYFRSPFIISSSNFEDVPAGCGVRDIEAYRSRKACLVEMRRKPGVLFDPDNPLLASQARFKDPMSQMLLEGQTEENSWLEMEDVVTEIINISARHRAAQEKLQARYMREKSLLDPLALAAENFLKGEVQTHILIFLVLNLKSWNPKPQGGRGLYVDGSLYLLDPTFQFEEIPITDDGYKRLWDERMRKSFLSKIQTGEYLNSKSMVVTGFLRSLVNGDCAVLSKDTLSSSASVAQQSIFKALGIDERIYLRTLQHQLDLYSADIPENPYSNSAWIKILKAIGMGRTYLAENGCGILMIAAALILILVSAWGFWKLFIGLFSGSMSLGAAIVGMSAVDIKAQQKSSSQEGGYRARNIPIHHRYAYAKSQAGDGLLPAARFVCCYLSTGGGFVSAMQYKNKSVRMTRHQALRFQEGEQLTVIFSSTGESQLIRWHKYMMREEPGSEIVTWLAPSLPSLSPDLKDLFLEDKEVDLPNHFKTIGYVLRVDNTAFHYDLLDTYAAVDKTPLPLKGVVGNELYLHEIPEKITFHYESRNDDCGMIILCQIKGKMRVVGMLVAGKDKTSWADIMPPNTLAELQSQIEYIPKFGEAYDGFFKAGYVPMADAPTLPKKTNMVPVPQSLRVPCDVPIKEPAVLTNADKRCPAGVNPPVTALKKKFEHPMKELEQEILDEVATDILETWYDCEDHVLNDIPLVVAINGIPADSEEAELENFVMKTSPGYPYFKNNRAEKLKGKSAYFEEAEDGTLKLKEGGMAAKLHENLVEFTKNEVPELVVIECTKDELLPERKIKVGACRLFEIMPLHYNLFLRQKTCAFTQFLQHNRHVLPCQVGTNPYSREWGHMLNRLMRPKTNEAINCDYSGFDGLLNAQVIECIAKMINRLYALSGESEVQQAQRYNMLMALVGRYAFVGPEVYKVNCGLPSGFALTVVVNSVFNEILIRYAYKKLAPKPERNRFNQVVCLLVYGDDNLISVSPSIASWFTGEAIRITLAEKKVKITDGSDKDAPTIEAKSFWELDFLKRKFLKLDNGIVQAPLDRSAIFSSLYWLTPDKSKFHASQRASDFQGTVDVVEELILNVNVALMELYLHNDPREFSRVRDFYIKALPLATGQFRTWAFCEAFHSAQQTGMLKYDPAKVLDHMSGLDFKKFMHVSEQGNKAHFYTEMLGVAGPHYKPQENDFIVSTEPLKMGVCGEHVPIQYGSGVGGLPTKKWVLDFGRPSQLKNKLGYLIHPILRAQIEAGKRLVFMSPAPYVANNAALIAFGTGGKMLIQKDALVHYRNVIPESTSGLEQYFDAPLPTATIGTFYFANGETYAALCEYKEGKVLNYEGFPTLILNEAAKDRKVPCMVATQAKTKFKVSLACDSTMCPHHTAVCETYEKAFRHCWLAKCKTSAVKVSPWHGTKLS.

Residues 566 to 1156 (MCTALAAGIF…MGRTYLAENG (591 aa)) are Cytoplasmic-facing. Residues 750–916 (TEGPNELHKR…PGVLFDPDNP (167 aa)) enclose the SF3 helicase domain. ATP is bound at residue 780-787 (GQRHCGKS). The chain crosses the membrane as a helical span at residues 1157 to 1177 (CGILMIAAALILILVSAWGFW). Topologically, residues 1178–1203 (KLFIGLFSGSMSLGAAIVGMSAVDIK) are lumenal. Residues 1227–1436 (AYAKSQAGDG…WADIMPPNTL (210 aa)) form the Peptidase C3 domain. Active-site for picornain 3C-like protease activity residues include His-1270, Glu-1308, and Cys-1400. The RdRp catalytic domain maps to 1713 to 1841 (NEAINCDYSG…SVSPSIASWF (129 aa)).

Belongs to the nepoviruses RNA1 polyprotein family. Post-translationally, specific enzymatic cleavages by picornain 3C-like protease in vivo yield mature proteins. Picornain 3C-like protease is autocatalytically processed. VPg is uridylylated by the polymerase and is covalently linked to the 5'-end of genomic RNA. This uridylylated form acts as a nucleotide-peptide primer for the polymerase.

The protein resides in the host endoplasmic reticulum lumen. The protein localises to the host endoplasmic reticulum membrane. The enzyme catalyses RNA(n) + a ribonucleoside 5'-triphosphate = RNA(n+1) + diphosphate. Picornain 3C-like protease is a thiol protease that cleaves the P1 and P2 polyproteins. The chain is RNA1 polyprotein from Beet ringspot virus (BRSV).